The primary structure comprises 201 residues: Large ribosomal subunit protein uL4 (201 aa).

Positions Thr43 to Gly66 are disordered.

This sequence belongs to the universal ribosomal protein uL4 family. Part of the 50S ribosomal subunit.

One of the primary rRNA binding proteins, this protein initially binds near the 5'-end of the 23S rRNA. It is important during the early stages of 50S assembly. It makes multiple contacts with different domains of the 23S rRNA in the assembled 50S subunit and ribosome. Functionally, forms part of the polypeptide exit tunnel. The polypeptide is Large ribosomal subunit protein uL4 (Tolumonas auensis (strain DSM 9187 / NBRC 110442 / TA 4)).